We begin with the raw amino-acid sequence, 214 residues long: Pyrrolidone-carboxylate peptidase (214 aa).

Residues Glu80, Cys143, and His166 contribute to the active site.

It belongs to the peptidase C15 family. In terms of assembly, homotetramer.

It is found in the cytoplasm. It carries out the reaction Release of an N-terminal pyroglutamyl group from a polypeptide, the second amino acid generally not being Pro.. Functionally, removes 5-oxoproline from various penultimate amino acid residues except L-proline. This Escherichia fergusonii (strain ATCC 35469 / DSM 13698 / CCUG 18766 / IAM 14443 / JCM 21226 / LMG 7866 / NBRC 102419 / NCTC 12128 / CDC 0568-73) protein is Pyrrolidone-carboxylate peptidase.